The sequence spans 300 residues: C-5 sterol desaturase (300 aa).

4 helical membrane-spanning segments follow: residues 3 to 23 (DPVLFAIPCFLLLLILEWTAA), 68 to 88 (SLALLGYAAIYAYLAPWQLSA), 91 to 111 (WYTWVIAIVGVDLLYYSYHRI), and 147 to 167 (ILMWVPLPLMGLPPWMVFCSW). Residues 94–227 (WVIAIVGVDL…LIIWDRLFGS (134 aa)) form the Fatty acid hydroxylase domain.

Belongs to the sterol desaturase family.

Its subcellular location is the cell membrane. In Mycobacterium bovis (strain ATCC BAA-935 / AF2122/97), this protein is C-5 sterol desaturase (erg3).